The chain runs to 123 residues: ATP synthase epsilon chain (123 aa).

The protein belongs to the ATPase epsilon chain family. F-type ATPases have 2 components, CF(1) - the catalytic core - and CF(0) - the membrane proton channel. CF(1) has five subunits: alpha(3), beta(3), gamma(1), delta(1), epsilon(1). CF(0) has three main subunits: a, b and c.

It is found in the cell inner membrane. Its function is as follows. Produces ATP from ADP in the presence of a proton gradient across the membrane. The protein is ATP synthase epsilon chain of Helicobacter acinonychis (strain Sheeba).